We begin with the raw amino-acid sequence, 261 residues long: Phosphatidylglycerol--prolipoprotein diacylglyceryl transferase (261 aa).

3 helical membrane passes run 20-40, 54-74, and 88-108; these read LAIH…VWLA, IIDF…LYYV, and IIAI…GAIV. Arg-139 contributes to the a 1,2-diacyl-sn-glycero-3-phospho-(1'-sn-glycerol) binding site. 2 consecutive transmembrane segments (helical) span residues 175–195 and 235–255; these read MPTF…VMVF and ARVS…LFVY.

This sequence belongs to the Lgt family.

The protein resides in the cell membrane. The catalysed reaction is L-cysteinyl-[prolipoprotein] + a 1,2-diacyl-sn-glycero-3-phospho-(1'-sn-glycerol) = an S-1,2-diacyl-sn-glyceryl-L-cysteinyl-[prolipoprotein] + sn-glycerol 1-phosphate + H(+). It functions in the pathway protein modification; lipoprotein biosynthesis (diacylglyceryl transfer). In terms of biological role, catalyzes the transfer of the diacylglyceryl group from phosphatidylglycerol to the sulfhydryl group of the N-terminal cysteine of a prolipoprotein, the first step in the formation of mature lipoproteins. This chain is Phosphatidylglycerol--prolipoprotein diacylglyceryl transferase, found in Lactococcus lactis subsp. cremoris (strain MG1363).